The sequence spans 233 residues: MDCKYLLELLDSYSFIRSSRSFSSPIIIHGVAGCGKSTIIQKIALAFPELLIGSFTPALLDSNSGRKQLAVTSDPLDILDEYLGGPNPVVRLAKFCDPLQYSCEQPEVPHFTSLLTWRFCVRTTALLNGIFGCQIKSRREDLCHLTHENPYTTDPKGVVVAHEQEVINLLLQHGCPVTPTQHLWGLTIPVVSVYITSIASLSTVDRANLFLSLTRDSKALHIFEFDAWSHATC.

The region spanning 1 to 134 (MDCKYLLELL…ALLNGIFGCQ (134 aa)) is the (+)RNA virus helicase ATP-binding domain. The 99-residue stretch at 135–233 (IKSRREDLCH…EFDAWSHATC (99 aa)) folds into the (+)RNA virus helicase C-terminal domain.

It belongs to the Tymovirales TGBp1 protein family. Homodimer and homooligomer. Interacts with capsid protein. Interacts with host AGO1; this interaction targets the host protein for degradation, thereby suppressing the antiviral RNA silencing.

The protein localises to the host cytoplasm. In terms of biological role, transports viral genome to neighboring plant cells directly through plasmosdesmata, without any budding. The movement protein allows efficient cell to cell propagation, by bypassing the host cell wall barrier. Increases plasmodesma size exclusion limit. Acts as a suppressor of RNA-mediated gene silencing, also known as post-transcriptional gene silencing (PTGS), a mechanism of plant viral defense that limits the accumulation of viral RNAs. This Narcissus mosaic virus (NMV) protein is Movement and silencing protein TGBp1.